We begin with the raw amino-acid sequence, 871 residues long: Coatomer subunit gamma-2 (871 aa).

Over residues 1 to 11 (MIKKFDKKDEE) the composition is skewed to basic and acidic residues. A disordered region spans residues 1–20 (MIKKFDKKDEESGSGSNPFR). HEAT repeat units follow at residues 64–101 (TEAT…ISED), 283–320 (RELA…KHPS), 321–355 (AVTA…GSES), 356–392 (SVDR…KYPR), 395–430 (SVMM…ENPE), and 467–504 (PVPS…QNEN). Threonine 594 carries the phosphothreonine modification.

Belongs to the COPG family. As to quaternary structure, oligomeric complex. Binds to CDC42. Interacts with JAGN1. Interacts with TMED10 (via cytoplasmic domain).

The protein localises to the cytoplasm. Its subcellular location is the cytosol. The protein resides in the golgi apparatus membrane. It is found in the cytoplasmic vesicle. It localises to the COPI-coated vesicle membrane. In terms of biological role, the coatomer is a cytosolic protein complex that binds to dilysine motifs and reversibly associates with Golgi non-clathrin-coated vesicles, which further mediate biosynthetic protein transport from the ER, via the Golgi up to the trans Golgi network. Coatomer complex is required for budding from Golgi membranes, and is essential for the retrograde Golgi-to-ER transport of dilysine-tagged proteins. In mammals, the coatomer can only be recruited by membranes associated to ADP-ribosylation factors (ARFs), which are small GTP-binding proteins; the complex also influences the Golgi structural integrity, as well as the processing, activity, and endocytic recycling of LDL receptors. In Bos taurus (Bovine), this protein is Coatomer subunit gamma-2 (COPG2).